The following is a 120-amino-acid chain: Large ribosomal subunit protein uL18 (120 aa).

It belongs to the universal ribosomal protein uL18 family. Part of the 50S ribosomal subunit; part of the 5S rRNA/L5/L18/L25 subcomplex. Contacts the 5S and 23S rRNAs.

In terms of biological role, this is one of the proteins that bind and probably mediate the attachment of the 5S RNA into the large ribosomal subunit, where it forms part of the central protuberance. The protein is Large ribosomal subunit protein uL18 of Lawsonia intracellularis (strain PHE/MN1-00).